The sequence spans 913 residues: MADDSVLPSPSEITSLADSSVFDSKVAEMSKENLCLASTSNVDEEMPQVEARVIMVQDAGKQEELLKALKTIKIMEVPVIKIKESCPGKSEEKLIKSIINMEMKVPCVKMDSMEEFESLDSPEFENIFVVTDFQNSVFNDLYKADCRIVGPPVILNCAQRGEPLPFSCRPLYCTSMLNLVLCFTGFRKKEELVKLVTLVHHMGGVIRKECNSKVTHLVANCTQGEKFRVAVSLGTPIMKPEWIYKAWERRNEQCFCAAVDDFRNEFKVPPFQDCILSFLGFSDEEKHSMEEMTEMQGGSYLPVGDERCTHLIVEENTVKDLPFEPSKKLFVVKQEWFWGSIQMDARAGETMYLYEKANTPELKKSVSLLSLSTPNSNRKRRRLKETLAQLSRETDLSPFPPRKRPSAEHSLSIGSLLDISNTPESSIHYGETPKSCAKSSRSSTPVPPKQSARWQVAKELYQTESNYVNILATIIQLFQVPLEEEGQRGGPILAPEEIKTIFGSIPDIFDVHMKIKDDLEDLIANWDESRSIGDIFLKYAKDLVKTYPPFVNFFEMSKEMIIKCEKQKPRFHAFLKINQAKPECGRQSLVELLIRPVQRLPSVALLLNDLKKHTADENPDKSTLEKAIGSLKEVMTHINEDKRKTEAQKQIFDVVYEVDGCPANLLSSHRSLVQRVETVSLGEHPCDRGEQVTLFLFNDCLEIARKRHKVIGTFRSPHDRTRPPASLKHIHLMPLSQIKKVLDIRETEDCHNAFALLVRPPTEQANVLLSFQMTSEELPKESWLKMLCRHVANTICKADAENLMYVADPESFEVNTKDMDSTLSRASRAIKKTSKKVTRAFSFSKTPKRALRMALSSSHSSEGRSPPSSGKLAVSRLSSTSSLAGIPSPSLVSLPSFFERRSHTLSRSTTHLI.

Ala-2 is modified (N-acetylalanine). 2 BRCT domains span residues 176–260 (MLNL…AAVD) and 266–354 (FKVP…MYLY). Thr-359 carries the phosphothreonine; by PKC/PRKCI modification. Ser-367 and Ser-370 each carry phosphoserine. A Phosphothreonine modification is found at Thr-373. At Ser-376 the chain carries Phosphoserine. 2 short sequence motifs (nuclear localization signal) span residues 378–382 (RKRRR) and 401–405 (PRKRP). 2 disordered regions span residues 389-415 (QLSR…SIGS) and 427-450 (IHYG…PPKQ). Thr-444 is modified (phosphothreonine; by CDK1). Residues 452–641 (ARWQVAKELY…KEVMTHINED (190 aa)) form the DH domain. Lys-611 participates in a covalent cross-link: Glycyl lysine isopeptide (Lys-Gly) (interchain with G-Cter in SUMO2). Residues 675–794 (RVETVSLGEH…KMLCRHVANT (120 aa)) enclose the PH domain. Residues Ser-716 and Ser-842 each carry the phosphoserine modification. Phosphothreonine; by CDK1 is present on Thr-846. A disordered region spans residues 853 to 874 (MALSSSHSSEGRSPPSSGKLAV). Over residues 856–870 (SSSHSSEGRSPPSSG) the composition is skewed to low complexity. Ser-861 and Ser-865 each carry phosphoserine.

As to quaternary structure, homodimer. Homooligomer. Found in the centralspindlin complex. Interacts with NR1I3. Interacts (Thr-359 phosphorylated form) with PARD6A; the interaction is observed in cancer cells. Interacts (Thr-359 phosphorylated form) with PRKCI; the interaction is observed in cancer cells. Interacts with PKP4; the interaction is observed at the midbody. Interacts with RACGAP1; the interaction is direct, occurs in a microtubule-dependent manner, occurs at anaphase and during cytokinesis, is inhibited in metaphase by phosphorylation of ECT2 on Thr-373 and is stimulated in early anaphase by dephosphorylation of ECT2 probably on Thr-373 through CDK1 activity. Interacts with PLK1; the interaction is stimulated upon its phosphorylation on Thr-444. Interacts with RHOA; the interaction results in allosteric activation of ECT2. Interacts with KIF23, PARD3, PARD6B and PRKCQ. Interacts with NEDD9/HEF1. Phosphorylated by PLK1 in vitro. Hyperphosphorylated during the G2 phase of the cell cycle. Phosphorylation at Thr-373 occurs during the G2/M phase, relieves its auto-inhibition status and stimulates its GEF activity. Phosphorylation at Thr-444 in G2/M phase is required for subsequent binding with PLK1 and Rho exchange activation. Dephosphorylated at the time of cytokinesis. Phosphorylation at Thr-359 is required for its transformation activity in cancer cells. Highest expression in testis. Also detectable in brain, kidney, liver and spleen.

The protein resides in the nucleus. Its subcellular location is the cytoplasm. It is found in the cytoskeleton. It localises to the spindle. The protein localises to the cleavage furrow. The protein resides in the midbody. Its subcellular location is the cell junction. It is found in the tight junction. Autoinhibited by the C-terminal PH domain which folds back and binds to the surface of the DH domain, blocking binding of RHOA to the catalytic center of the DH domain. The 2nd BRCT domain is also involved in inhibition, probably by helping to impede RHOA binding. Allosterically activated by binding of activated GTP-bound RHOA to the PH domain which stimulates the release of PH inhibition and promotes the binding of substrate RHOA to the catalytic center. Binding of phosphorylated RACGAP1 to the N-terminal BRCT domain-containing region also releases autoinhibition. Guanine nucleotide exchange factor (GEF) that catalyzes the exchange of GDP for GTP. Promotes guanine nucleotide exchange on the Rho family members of small GTPases, like RHOA, RHOC, RAC1 and CDC42. Required for signal transduction pathways involved in the regulation of cytokinesis. Component of the centralspindlin complex that serves as a microtubule-dependent and Rho-mediated signaling required for the myosin contractile ring formation during the cell cycle cytokinesis. Regulates the translocation of RHOA from the central spindle to the equatorial region. Plays a role in the control of mitotic spindle assembly; regulates the activation of CDC42 in metaphase for the process of spindle fibers attachment to kinetochores before chromosome congression. Involved in the regulation of epithelial cell polarity; participates in the formation of epithelial tight junctions in a polarity complex PARD3-PARD6-protein kinase PRKCQ-dependent manner. Plays a role in the regulation of neurite outgrowth. Inhibits phenobarbital (PB)-induced NR1I3 nuclear translocation. Stimulates the activity of RAC1 through its association with the oncogenic PARD6A-PRKCI complex in cancer cells, thereby acting to coordinately drive tumor cell proliferation and invasion. Also stimulates genotoxic stress-induced RHOB activity in breast cancer cells leading to their cell death. The protein is Protein ECT2 (Ect2) of Mus musculus (Mouse).